We begin with the raw amino-acid sequence, 342 residues long: Guanine nucleotide-binding protein alpha-9 subunit (342 aa).

Residue Gly-2 is the site of N-myristoyl glycine attachment. Cys-3 is lipidated: S-palmitoyl cysteine. The 315-residue stretch at 28-342 folds into the G-alpha domain; sequence REIKLLLLGS…IIQSILKLHY (315 aa). Residues 31-44 are G1 motif; that stretch reads KLLLLGSGDSGKST. GTP is bound by residues 36–43, 167–173, 192–196, 261–264, and Ala-316; these read GSGDSGKS, LRCRQRT, DVGGQ, and NKND. The Mg(2+) site is built by Ser-43 and Thr-173. A G2 motif region spans residues 165-173; that stretch reads DVLRCRQRT. The tract at residues 188–197 is G3 motif; the sequence is FRLIDVGGQK. Residues 257–264 are G4 motif; sequence VLFLNKND. The segment at 314–319 is G5 motif; it reads TTATDT.

This sequence belongs to the G-alpha family. G proteins are composed of 3 units; alpha, beta and gamma. The alpha chain contains the guanine nucleotide binding site.

Functionally, guanine nucleotide-binding proteins (G proteins) are involved as modulators or transducers in various transmembrane signaling systems. G alpha-9 antagonizes broad chemotactic response. It functions rapidly following receptor stimulation to negatively regulate PI3K/PTEN, adenylyl cyclase, and guanylyl cyclase pathways. This Dictyostelium discoideum (Social amoeba) protein is Guanine nucleotide-binding protein alpha-9 subunit (gpaI).